The primary structure comprises 206 residues: Large ribosomal subunit protein bL9 (206 aa).

Positions 182–206 (FAENQQKALAKEMNDNDANSINEEA) are disordered. Polar residues predominate over residues 197–206 (NDANSINEEA).

The protein belongs to the bacterial ribosomal protein bL9 family.

Binds to the 23S rRNA. In Bartonella henselae (strain ATCC 49882 / DSM 28221 / CCUG 30454 / Houston 1) (Rochalimaea henselae), this protein is Large ribosomal subunit protein bL9.